We begin with the raw amino-acid sequence, 754 residues long: MKSWISISFLCMLFPLSNGQLGSSGQVTLQGAQISQATQSLQGTAPTSQYPQGGTQISQGGAQATQNYQGVAQGTQISQGLTQGAQISQGGGQGISQGATQGTQFSQGTVPSGQFFQNIVQGTQAVLSGAQHSQAGAQGSQFPQSAAHTAQHHQGTAQPAQSGTHAILKEMEKSLAEFKAYVEYLENMVYKERMKYPSPYIQNFTASPSNFTYTTFENDVDMRLSSMERISSELVKQMVNCPRGPVPPPPPQSVMVQSDTVDNSSNIYVSWDPPYFEGKPLTGENMHYKVYFSPSDQYGKATGGEFIFRICDANFTQASVTDLNPRSFYSIQVAATLCEAIESEGTSTSVKTPDLIPSAPLNLKLEGTKPNAFAVSWDPPTVKGTLTNYTIYATEESGKATMVTIDPKLTSYALYNLYEGTMYTIRIAASSDNGMSPKSEPLEVTTDKFIPMAPRNVRAIDNNLTSVTLEWDAPLPGRGMIRGYRINYTLDFTDYEEMLISDPSITTATITNLTPATEYYFQVFARTMKRLGYGSHLIMNKTKMDVPSEPMSVVHRIMDNGLQRIQVSWQPPENTYGPIIDYIIHWGVRGGATRKEFLTPYVLSWTSDFLDDNANHDFKLFAQNVVGIGKPVAFSVKTLPKPQILVPNVRVKRETSKNNITSLTVTWGSPKVPVDGFFVLYRKYEGVYSDRWKFIEIPKPNARGTTITVTQENVPYVVVCKGFKRQKKPTSNLSSQQFSFPGQQVGQQQSNPWI.

The first 19 residues, 1–19, serve as a signal peptide directing secretion; that stretch reads MKSWISISFLCMLFPLSNG. 3 disordered regions span residues 40 to 61, 85 to 106, and 130 to 163; these read SLQG…SQGG, AQIS…TQFS, and AQHS…AQSG. Over residues 130–161 the composition is skewed to low complexity; the sequence is AQHSQAGAQGSQFPQSAAHTAQHHQGTAQPAQ. Fibronectin type-III domains follow at residues 250-355, 359-449, 453-545, 549-642, and 645-742; these read PPQS…TPDL, APLN…TDKF, APRN…TKMD, EPMS…LPKP, and LVPN…SFPG. The interval 731 to 754 is disordered; that stretch reads SNLSSQQFSFPGQQVGQQQSNPWI.

As to expression, prismatic layer of shell (at protein level). Expressed primarily in the mantle with highest level in the outer epithelium of the mantle edge and lower level in the mantle pallium.

The protein resides in the secreted. In Margaritifera margaritifera (Freshwater pearl mussel), this protein is Fibronectin type III domain-containing protein 1.